We begin with the raw amino-acid sequence, 469 residues long: Interstitial collagenase (469 aa).

The signal sequence occupies residues 1 to 18; the sequence is MPRLPLLLLLLWGTGSHG. Positions 19–99 are cleaved as a propeptide — activation peptide; that stretch reads FPAATSETQE…PRCGVPDVAP (81 aa). Positions 90 to 97 match the Cysteine switch motif; it reads PRCGVPDV. Cys-92 contacts Zn(2+). Asn-120 carries an N-linked (GlcNAc...) asparagine glycan. The Ca(2+) site is built by Asp-124 and Asp-158. Zn(2+) is bound by residues His-168 and Asp-170. Positions 175, 176, 178, and 180 each coordinate Ca(2+). His-183 contributes to the Zn(2+) binding site. Gly-190, Gly-192, and Asp-194 together coordinate Ca(2+). Zn(2+) is bound at residue His-196. Residues Asp-198, Asp-199, and Glu-201 each coordinate Ca(2+). His-218 serves as a coordination point for Zn(2+). The active site involves Glu-219. His-222 and His-228 together coordinate Zn(2+). Residue Thr-274 is modified to Phosphothreonine. Hemopexin repeat units lie at residues 275–324, 325–371, 374–422, and 423–466; these read PEVC…WPQL, PNGL…FGFP, VKSI…FPGI, and GNKV…WFNC. Cys-278 and Cys-466 are disulfide-bonded. The Ca(2+) site is built by Asp-285 and Gln-329. Residue Tyr-360 is modified to Phosphotyrosine; by PKDCC. Ca(2+) is bound by residues Asp-378 and Asp-427.

Belongs to the peptidase M10A family. It depends on Ca(2+) as a cofactor. Zn(2+) serves as cofactor. Post-translationally, tyrosine phosphorylated in platelets by PKDCC/VLK.

Its subcellular location is the secreted. The protein localises to the extracellular space. The protein resides in the extracellular matrix. The catalysed reaction is Cleavage of the triple helix of collagen at about three-quarters of the length of the molecule from the N-terminus, at 775-Gly-|-Ile-776 in the alpha1(I) chain. Cleaves synthetic substrates and alpha-macroglobulins at bonds where P1' is a hydrophobic residue.. Its activity is regulated as follows. Can be activated without removal of the activation peptide. Cleaves collagens of types I, II, and III at one site in the helical domain. Also cleaves collagens of types VII and X. In Bos taurus (Bovine), this protein is Interstitial collagenase (MMP1).